Reading from the N-terminus, the 557-residue chain is Neurofilament light polypeptide (557 aa).

Serine 2 carries the N-acetylserine modification. The tract at residues 2–89 (SSYSYDPYYT…KIVRTQEKAQ (88 aa)) is head. The region spanning 86 to 396 (EKAQLQDLND…KLLEGEETRL (311 aa)) is the IF rod domain. The coil 1A stretch occupies residues 90 to 121 (LQDLNDRFANFIERVHELEQRNKVLEAELLLL). Residues 122 to 134 (RQKHNEPSRLRDL) are linker 1. The tract at residues 135-230 (YEQEVRELRL…KVHEEELAQL (96 aa)) is coil 1B. A linker 12 region spans residues 231-248 (QSQVQYAQISLEVEVAKP). Positions 249-267 (DLSSALRDIRAQYEKLAAK) are coil 2A. The tract at residues 268 to 276 (NMQSAEDWF) is linker 2. The segment at 277-392 (KSRFTVLTQS…AAYRKLLEGE (116 aa)) is coil 2B. The segment at 393 to 437 (ETRLSFSGVGAITSGYTQSAPVFGRSAYSLQSSSYMTSRAFPTYY) is tail, subdomain A. The interval 393-557 (ETRLSFSGVG…KKKKKKKKKK (165 aa)) is tail. Positions 438–557 (SSHVQEEQLD…KKKKKKKKKK (120 aa)) are tail, subdomain B (acidic). Positions 452–557 (IESSRAEEAK…KKKKKKKKKK (106 aa)) are disordered. The segment covering 453–464 (ESSRAEEAKAEA) has biased composition (basic and acidic residues). Residues 465 to 538 (PEEEEEEAGE…GEGEEEEEGK (74 aa)) show a composition bias toward acidic residues. Positions 539–548 (GEEPAEEESK) are enriched in basic and acidic residues.

This sequence belongs to the intermediate filament family. As to quaternary structure, forms homodimers (in vitro).

The protein resides in the cell projection. The protein localises to the axon. It localises to the cytoplasm. Its subcellular location is the cytoskeleton. Functionally, neurofilaments usually contain three intermediate filament proteins: NEFL, NEFM, and NEFH which are involved in the maintenance of neuronal caliber. May additionally cooperate with other neuronal intermediate filament proteins to form neuronal filamentous networks. This Xenopus tropicalis (Western clawed frog) protein is Neurofilament light polypeptide (nefl).